The chain runs to 103 residues: Small ribosomal subunit protein uS10 (103 aa).

This sequence belongs to the universal ribosomal protein uS10 family. As to quaternary structure, part of the 30S ribosomal subunit.

In terms of biological role, involved in the binding of tRNA to the ribosomes. This Paraburkholderia xenovorans (strain LB400) protein is Small ribosomal subunit protein uS10.